Consider the following 404-residue polypeptide: Probable oxalate decarboxylase ARB_04859 (404 aa).

The first 17 residues, 1-17 (MKYSAVLVAALAAIADA), serve as a signal peptide directing secretion. Residues 74-215 (FSLSKTRMLY…NFGVPPSTFD (142 aa)) form the Cupin type-1 1 domain. Mn(2+) is bound by residues histidine 117, histidine 119, glutamate 123, and histidine 162. N-linked (GlcNAc...) asparagine glycosylation is found at asparagine 226 and asparagine 244. Residues 249 to 393 (FHISNAPEIQ…AINVPIEVIE (145 aa)) form the Cupin type-1 2 domain. 4 residues coordinate Mn(2+): histidine 296, histidine 298, glutamate 303, and histidine 342. Residue asparagine 346 is glycosylated (N-linked (GlcNAc...) asparagine). The active-site Proton donor is glutamate 357.

It depends on Mn(2+) as a cofactor.

The protein localises to the secreted. The catalysed reaction is oxalate + H(+) = formate + CO2. Converts oxalate to formate and CO(2) in an O(2)-dependent reaction. Can also catalyze minor side reactions: oxalate oxidation to produce H(2)O(2), and oxalate-dependent, H(2)O(2)-independent dye oxidations. In Arthroderma benhamiae (strain ATCC MYA-4681 / CBS 112371) (Trichophyton mentagrophytes), this protein is Probable oxalate decarboxylase ARB_04859.